Reading from the N-terminus, the 66-residue chain is Large ribosomal subunit protein uL29 (66 aa).

It belongs to the universal ribosomal protein uL29 family. As to quaternary structure, part of the 50S ribosomal subunit.

This chain is Large ribosomal subunit protein uL29 (rpmC), found in Bacillus subtilis (strain 168).